Here is a 728-residue protein sequence, read N- to C-terminus: MSDRIDRDVINALIAGHFSDPFSVLGMHPTEAGVEVRALLPDATEVWVIEPKTGRKVGKLECLDSRGFFSGVIPRRKNIFRYQLAVLWHGQENLIDDPYSFGPLIQEMDAWLLSEGTHLRPYETLGAHADTMDGITGTRFSVWAPNAQRVSVVGQFNYWDGRRHPMRLRRESGIWELFIPGAHNGQLYKFEMIDAHGKLRVKADPYAFEAQMRPATASLICGLPEKVVQSEERKQANNFDAPISIYEVHLGSWRRHTDNNFWLSYRELADQLVPYAKWMGFTHIELLPINEHPFDGSWGYQPTGLYAPTRRFGTRDDFRYFINAAHAAGLSVILDWVPGHFPSDDFGLSEFDGTDLYEHSDPREGYHQDWNTLIYNYGRREVANYLVGNALYWIERFGIDALRVDAVASMIYRDYSRKEGEWIPNEYGGRENLEAIEFLRNTNRILGEQVPGAVTMAEESTDFPGVSRPPSMGGLGFWYKWNLGWMHDTLDYFKLDPVFRKYHHDKLTFGMLYNNTENFVLPLSHDEVVHGKKSILDRMPGDAWQKFANLRAYYGWMFAFPGKKLLFMGNEFAQGREWNHDSSLDWHLLEGGDNWHHGVQRLVRDLNLTYRHHKALHEMDFDSYGFEWLVVDDHERSVFVFVRRDSAGNEIIVASNFTPVPRPHYRFGINQPGKWREILNTDSSHYHGSNAGNAGAVQSDEHESHGRPHSLSLTLPPLSTIWLVREGE.

Aspartate 405 acts as the Nucleophile in catalysis. Glutamate 458 acts as the Proton donor in catalysis. A disordered region spans residues 686–712 (YHGSNAGNAGAVQSDEHESHGRPHSLS).

This sequence belongs to the glycosyl hydrolase 13 family. GlgB subfamily. As to quaternary structure, monomer.

The catalysed reaction is Transfers a segment of a (1-&gt;4)-alpha-D-glucan chain to a primary hydroxy group in a similar glucan chain.. It participates in glycan biosynthesis; glycogen biosynthesis. Catalyzes the formation of the alpha-1,6-glucosidic linkages in glycogen by scission of a 1,4-alpha-linked oligosaccharide from growing alpha-1,4-glucan chains and the subsequent attachment of the oligosaccharide to the alpha-1,6 position. The polypeptide is 1,4-alpha-glucan branching enzyme GlgB (Enterobacter sp. (strain 638)).